The sequence spans 141 residues: Drosulfakinins (141 aa).

The signal sequence occupies residues Met1–Ala31. The propeptide occupies Gln32–Asp73. Position 82 is a phenylalanine amide (Phe82). Residues Val86–Ala111 constitute a propeptide that is removed on maturation. Position 117 is a sulfotyrosine (Tyr117). Residue Phe122 is modified to Phenylalanine amide. Tyr134 is modified (sulfotyrosine). Phe139 is subject to Phenylalanine amide.

This sequence belongs to the gastrin/cholecystokinin family.

The protein resides in the secreted. Its function is as follows. Drosulfakinin-0 (DSK 0) plays diverse biological roles including regulating gut muscle contraction in adults but not in larvae. This is Drosulfakinins from Drosophila simulans (Fruit fly).